The following is a 55-amino-acid chain: Lantibiotic nisin-U (55 aa).

The propeptide occupies 1–24; that stretch reads MNNEDFNLDLIKISKENNSGASPR. T26 carries the 2,3-didehydrobutyrine modification. A cross-link (lanthionine (Ser-Cys)) is located at residues 27 to 31; sequence SKSLC. S29 carries the post-translational modification 2,3-didehydroalanine (Ser). 4 cross-links (beta-methyllanthionine (Thr-Cys)) span residues 32 to 35, 37 to 43, 47 to 50, and 49 to 52; these read TPGC, TGILMTC, TATC, and TCGC. T42 is subject to 2,3-didehydrobutyrine.

Post-translationally, maturation of lantibiotics involves the enzymatic conversion of Thr, and Ser into dehydrated AA and the formation of thioether bonds with cysteine. This is followed by membrane translocation and cleavage of the modified precursor.

It is found in the secreted. In terms of biological role, lanthionine-containing peptide antibiotic (lantibiotic) active on Gram-positive bacteria. The bactericidal activity of lantibiotics is based on depolarization of energized bacterial cytoplasmic membranes, initiated by the formation of aqueous transmembrane pores. This chain is Lantibiotic nisin-U (nsuA), found in Streptococcus uberis.